The sequence spans 697 residues: Lebercilin (697 aa).

The interval 1 to 90 (MGERAGSPGT…VGFRSQSLNR (90 aa)) is disordered. Residues serine 7 and serine 45 each carry the phosphoserine modification. Low complexity predominate over residues 32–45 (SSGRSSLVSSSPAS). Coiled coils occupy residues 103-297 (RILS…IKNI) and 389-485 (EEKF…RNLK). Disordered regions lie at residues 412-432 (WERE…EREE), 522-548 (HHLQ…PASP), and 606-697 (EQLF…VALR). Residues 416–432 (ELDKKQKEKASLLEREE) are compositionally biased toward basic and acidic residues. A compositionally biased stretch (polar residues) spans 527 to 547 (ISFSTPKGEGQNSGNVRSPAS). Residues 612 to 626 (SGSSTISSKSSDPNS) show a composition bias toward low complexity. Residues 686-697 (SVEDEIEEVALR) show a composition bias toward acidic residues.

It belongs to the LCA5 family. Interacts with NINL. Interacts with OFD1. Interacts with FAM161A. Interacts with components of the IFT complex B. Widely expressed.

The protein localises to the cytoplasm. Its subcellular location is the cytoskeleton. It is found in the cilium axoneme. It localises to the cilium basal body. The protein resides in the microtubule organizing center. The protein localises to the centrosome. Its subcellular location is the cell projection. It is found in the cilium. Involved in intraflagellar protein (IFT) transport in photoreceptor cilia. This is Lebercilin (LCA5) from Homo sapiens (Human).